Reading from the N-terminus, the 359-residue chain is Protein mab-21-like 2-A (359 aa).

The protein belongs to the mab-21 family.

It localises to the nucleus. It is found in the cytoplasm. Its function is as follows. Required for normal development of the eye. May promote dorsalization of the developing embryo by antagonizing the ventralizing factor bmp4. Functional antagonism of bmp4 may require interaction with smad1. Required for gastrulation and subsequent neural development. May function as a transcriptional repressor. The polypeptide is Protein mab-21-like 2-A (mab21l2-a) (Xenopus laevis (African clawed frog)).